The following is a 503-amino-acid chain: UDP-N-acetylmuramoylalanine--D-glutamate ligase (503 aa).

129-135 (GTNGKTT) provides a ligand contact to ATP.

It belongs to the MurCDEF family.

Its subcellular location is the cytoplasm. It carries out the reaction UDP-N-acetyl-alpha-D-muramoyl-L-alanine + D-glutamate + ATP = UDP-N-acetyl-alpha-D-muramoyl-L-alanyl-D-glutamate + ADP + phosphate + H(+). The protein operates within cell wall biogenesis; peptidoglycan biosynthesis. In terms of biological role, cell wall formation. Catalyzes the addition of glutamate to the nucleotide precursor UDP-N-acetylmuramoyl-L-alanine (UMA). This chain is UDP-N-acetylmuramoylalanine--D-glutamate ligase, found in Burkholderia multivorans (strain ATCC 17616 / 249).